A 497-amino-acid polypeptide reads, in one-letter code: Protein nucleotidyltransferase YdiU (497 aa).

Positions 88, 90, 91, 110, 122, 123, 173, and 180 each coordinate ATP. Catalysis depends on Asp-249, which acts as the Proton acceptor. Asn-250 and Asp-259 together coordinate Mg(2+). An ATP-binding site is contributed by Asp-259. Residues 477–497 (FARYAEPPEGGGRGYRTFCGT) form a disordered region.

It belongs to the SELO family. Mg(2+) is required as a cofactor. It depends on Mn(2+) as a cofactor.

It catalyses the reaction L-seryl-[protein] + ATP = 3-O-(5'-adenylyl)-L-seryl-[protein] + diphosphate. The enzyme catalyses L-threonyl-[protein] + ATP = 3-O-(5'-adenylyl)-L-threonyl-[protein] + diphosphate. The catalysed reaction is L-tyrosyl-[protein] + ATP = O-(5'-adenylyl)-L-tyrosyl-[protein] + diphosphate. It carries out the reaction L-histidyl-[protein] + UTP = N(tele)-(5'-uridylyl)-L-histidyl-[protein] + diphosphate. It catalyses the reaction L-seryl-[protein] + UTP = O-(5'-uridylyl)-L-seryl-[protein] + diphosphate. The enzyme catalyses L-tyrosyl-[protein] + UTP = O-(5'-uridylyl)-L-tyrosyl-[protein] + diphosphate. In terms of biological role, nucleotidyltransferase involved in the post-translational modification of proteins. It can catalyze the addition of adenosine monophosphate (AMP) or uridine monophosphate (UMP) to a protein, resulting in modifications known as AMPylation and UMPylation. This is Protein nucleotidyltransferase YdiU from Methylorubrum extorquens (strain PA1) (Methylobacterium extorquens).